The following is a 125-amino-acid chain: Small ribosomal subunit protein bS6 (125 aa).

The segment at 101–125 (PMMKEEKAKNLLAPQSDAAEPTAAA) is disordered.

It belongs to the bacterial ribosomal protein bS6 family.

Its function is as follows. Binds together with bS18 to 16S ribosomal RNA. The chain is Small ribosomal subunit protein bS6 from Laribacter hongkongensis (strain HLHK9).